A 221-amino-acid chain; its full sequence is Phosphoglycolate phosphatase (221 aa).

The active-site Nucleophile is the D10. Residues D10, D12, and D168 each coordinate Mg(2+).

This sequence belongs to the HAD-like hydrolase superfamily. CbbY/CbbZ/Gph/YieH family. It depends on Mg(2+) as a cofactor.

It catalyses the reaction 2-phosphoglycolate + H2O = glycolate + phosphate. Its pathway is organic acid metabolism; glycolate biosynthesis; glycolate from 2-phosphoglycolate: step 1/1. Functionally, specifically catalyzes the dephosphorylation of 2-phosphoglycolate. Is involved in the dissimilation of the intracellular 2-phosphoglycolate formed during the DNA repair of 3'-phosphoglycolate ends, a major class of DNA lesions induced by oxidative stress. In Xanthomonas campestris pv. campestris (strain 8004), this protein is Phosphoglycolate phosphatase.